A 199-amino-acid chain; its full sequence is Holliday junction branch migration complex subunit RuvA (199 aa).

Residues M1 to S63 are domain I. Positions D64–A142 are domain II. A flexible linker region spans residues A143–V150. Residues V150–K199 are domain III.

The protein belongs to the RuvA family. Homotetramer. Forms an RuvA(8)-RuvB(12)-Holliday junction (HJ) complex. HJ DNA is sandwiched between 2 RuvA tetramers; dsDNA enters through RuvA and exits via RuvB. An RuvB hexamer assembles on each DNA strand where it exits the tetramer. Each RuvB hexamer is contacted by two RuvA subunits (via domain III) on 2 adjacent RuvB subunits; this complex drives branch migration. In the full resolvosome a probable DNA-RuvA(4)-RuvB(12)-RuvC(2) complex forms which resolves the HJ.

Its subcellular location is the cytoplasm. In terms of biological role, the RuvA-RuvB-RuvC complex processes Holliday junction (HJ) DNA during genetic recombination and DNA repair, while the RuvA-RuvB complex plays an important role in the rescue of blocked DNA replication forks via replication fork reversal (RFR). RuvA specifically binds to HJ cruciform DNA, conferring on it an open structure. The RuvB hexamer acts as an ATP-dependent pump, pulling dsDNA into and through the RuvAB complex. HJ branch migration allows RuvC to scan DNA until it finds its consensus sequence, where it cleaves and resolves the cruciform DNA. This is Holliday junction branch migration complex subunit RuvA from Acinetobacter baumannii (strain SDF).